A 263-amino-acid polypeptide reads, in one-letter code: tRNA pseudouridine synthase A (263 aa).

D54 (nucleophile) is an active-site residue. Y113 is a binding site for substrate.

Belongs to the tRNA pseudouridine synthase TruA family. In terms of assembly, homodimer.

It catalyses the reaction uridine(38/39/40) in tRNA = pseudouridine(38/39/40) in tRNA. Formation of pseudouridine at positions 38, 39 and 40 in the anticodon stem and loop of transfer RNAs. The chain is tRNA pseudouridine synthase A from Lactobacillus helveticus (strain DPC 4571).